A 368-amino-acid chain; its full sequence is Biglycan (368 aa).

Positions 1-16 (MKVLLLLCSCILVIHA) are cleaved as a signal peptide. The propeptide occupies 17–37 (LPFEQRGFWDFSMDDGMAMMK). Intrachain disulfides connect Cys63–Cys69 and Cys67–Cys76. LRR repeat units lie at residues 82 to 102 (TSIPKNLPKDTTLLDLQNNKI), 103 to 126 (TEIKKDDFKGLTNLYALVIVNNKI), 127 to 150 (SKINEKAFEPLQKMQKLYISKNNL), 151 to 171 (EEIPKNLPKSLVELRIHENKI), 172 to 195 (KKVPKGVFSGLKNMNCIEMGGNPL), 196 to 220 (ENGGIEAGAFDGLKLNYLRVSEAKL), 221 to 241 (SGIPKGLPSTLNELHLDNNKI), 242 to 265 (QAIEKEDLSQYASLYRLGLGHNNI), 266 to 289 (RMIENGSLSFMPVLRELHLDNNKL), 290 to 312 (SKVPPGLPDMKLLQVVYLHSNNI), 313 to 342 (TQVGVNDFCPIGFGVKRAYYNGISLFNNPV), and 343 to 368 (PYWEVQPATFRCVTDRLAIQFGNYRK). 2 N-linked (GlcNAc...) asparagine glycosylation sites follow: Asn270 and Asn311. An intrachain disulfide couples Cys321 to Cys354.

It belongs to the small leucine-rich proteoglycan (SLRP) family. SLRP class I subfamily.

The protein resides in the secreted. It localises to the extracellular space. The protein localises to the extracellular matrix. In terms of biological role, may be involved in collagen fiber assembly. The sequence is that of Biglycan (bgn) from Xenopus laevis (African clawed frog).